A 183-amino-acid polypeptide reads, in one-letter code: Oligoribonuclease (183 aa).

The Exonuclease domain maps to 8–171; that stretch reads LIWIDLEMTG…DDIRDSIHEL (164 aa). Residue Tyr-129 is part of the active site.

Belongs to the oligoribonuclease family.

It localises to the cytoplasm. Functionally, 3'-to-5' exoribonuclease specific for small oligoribonucleotides. The polypeptide is Oligoribonuclease (Halorhodospira halophila (strain DSM 244 / SL1) (Ectothiorhodospira halophila (strain DSM 244 / SL1))).